A 150-amino-acid polypeptide reads, in one-letter code: UPF0336 protein SCO4636 (150 aa).

Positions 8–116 (VGRSYPPTAP…STIEAIKSMA (109 aa)) constitute a MaoC-like domain.

The protein belongs to the UPF0336 family.

The protein is UPF0336 protein SCO4636 of Streptomyces coelicolor (strain ATCC BAA-471 / A3(2) / M145).